A 141-amino-acid polypeptide reads, in one-letter code: Venom protein family 1 protein 1 (141 aa).

Residues 1-17 (MKSFIVVLCCLFAITYG) form the signal peptide. Residues cysteine 62 and cysteine 139 are joined by a disulfide bond.

This sequence belongs to the insect vpf1 family. Expressed by the venom gland (posterior main gland) (at protein level).

Its subcellular location is the secreted. In Platymeris rhadamanthus (Red spot assassin bug), this protein is Venom protein family 1 protein 1.